The following is a 146-amino-acid chain: Putative pre-16S rRNA nuclease (146 aa).

This sequence belongs to the YqgF nuclease family.

The protein localises to the cytoplasm. Functionally, could be a nuclease involved in processing of the 5'-end of pre-16S rRNA. This chain is Putative pre-16S rRNA nuclease, found in Burkholderia mallei (strain SAVP1).